A 180-amino-acid chain; its full sequence is Putative 5'(3')-deoxyribonucleotidase (180 aa).

Asp-9 functions as the Nucleophile in the catalytic mechanism. 3 residues coordinate Mg(2+): Asp-9, Asp-11, and Asp-135. Asp-11 acts as the Proton donor in catalysis.

It belongs to the 5'(3')-deoxyribonucleotidase family. Mg(2+) serves as cofactor.

Its function is as follows. Dephosphorylates the 5' and 2'(3')-phosphates of deoxyribonucleotides. In Staphylococcus aureus (strain MSSA476), this protein is Putative 5'(3')-deoxyribonucleotidase.